The following is a 413-amino-acid chain: Pyruvate dehydrogenase complex subunit homolog DDB_G0271564, mitochondrial (413 aa).

Residues 1-19 (MNRILKQVSNTKGKGIRFY) constitute a mitochondrion transit peptide. The region spanning 29 to 67 (YMFPSVRRLLVEYGINSSKEVTATGPQNRLLKGDVLAYI) is the Peripheral subunit-binding (PSBD) domain.

The protein belongs to the 2-oxoacid dehydrogenase family.

It localises to the mitochondrion. The pyruvate dehydrogenase complex catalyzes the overall conversion of pyruvate to acetyl-CoA and CO(2). It contains multiple copies of three enzymatic components: pyruvate dehydrogenase (E1), dihydrolipoamide acetyltransferase (E2) and lipoamide dehydrogenase (E3). The sequence is that of Pyruvate dehydrogenase complex subunit homolog DDB_G0271564, mitochondrial (pdhX) from Dictyostelium discoideum (Social amoeba).